Reading from the N-terminus, the 90-residue chain is DNA-binding protein HU-beta (90 aa).

Belongs to the bacterial histone-like protein family. In terms of assembly, heterodimer of an alpha and a beta chain.

Functionally, histone-like DNA-binding protein which is capable of wrapping DNA to stabilize it, and thus to prevent its denaturation under extreme environmental conditions. The polypeptide is DNA-binding protein HU-beta (hupB) (Serratia marcescens).